We begin with the raw amino-acid sequence, 335 residues long: Transmembrane protein 120B-B (335 aa).

Positions 1 to 39 (MSLQKCQEEWGELEKEFQQLQETHKVYKQKLEELSSLQN) form a coiled coil. Transmembrane regions (helical) follow at residues 100–116 (SLYLNLVLGNVNVTLLS), 130–150 (FKLYLTIILLLGAITCRFVLH), 157–177 (VFNFLLVWYFCTLTIRESILI), 193–213 (VSTFLSGVMLTWPDGLMYQMF), 268–288 (FLLPVLFFGHFWQLYNAMTLF), and 300–320 (QVFVLALTFLLLFLGNFLTTL).

It belongs to the TMEM120 family.

The protein localises to the nucleus inner membrane. Necessary for efficient adipogenesis. Does not show ion channel activity. The sequence is that of Transmembrane protein 120B-B (tmem120b-b) from Xenopus laevis (African clawed frog).